The sequence spans 97 residues: HssA/B-like protein 48 (97 aa).

Disordered regions lie at residues 1–20 (MTLF…SKSS) and 78–97 (GSGY…CCGI).

Belongs to the hssA/B family.

The polypeptide is HssA/B-like protein 48 (hssl48) (Dictyostelium discoideum (Social amoeba)).